An 883-amino-acid chain; its full sequence is UTP--glucose-1-phosphate uridylyltransferase 3, chloroplastic (883 aa).

The transit peptide at 1 to 72 (MANPQASPIL…HQVRHVSTVP (72 aa)) directs the protein to the chloroplast.

It belongs to the UDPGP type 1 family. It depends on Mg(2+) as a cofactor.

Its subcellular location is the plastid. It localises to the chloroplast. The enzyme catalyses alpha-D-glucose 1-phosphate + UTP + H(+) = UDP-alpha-D-glucose + diphosphate. Its activity is regulated as follows. Inhibited by pyrophosphate. In terms of biological role, involved in the biosynthesis of sulfolipids in the chloroplast. Catalyzes the first committed step in sulfolipid biosynthesis. Converts glucose 1-phosphate to UDP-glucose, the precursor of the polar head of sulfolipid. In addition to glucose 1-phosphate, can use galactose 1-phosphate, but with much lower activity. No uridyltransferase activity with other hexose monophosphates. Specific for UTP and cannot use ATP, CTP, and GTP. This is UTP--glucose-1-phosphate uridylyltransferase 3, chloroplastic from Arabidopsis thaliana (Mouse-ear cress).